Here is a 591-residue protein sequence, read N- to C-terminus: Polyphenol oxidase D, chloroplastic (591 aa).

Residues 1–83 (MASLCSNSST…ANAIPLAASA (83 aa)) constitute a chloroplast transit peptide. 2 disulfide bridges follow: Cys94–Cys110 and Cys109–Cys177. His176, His194, His203, His324, His328, and His366 together coordinate Cu cation. The segment at residues 180–194 (CNGAYRIGGKELQVH) is a cross-link (2'-(S-cysteinyl)-histidine (Cys-His)).

It belongs to the tyrosinase family. Cu(2+) serves as cofactor.

It localises to the plastid. It is found in the chloroplast thylakoid lumen. The catalysed reaction is 2 catechol + O2 = 2 1,2-benzoquinone + 2 H2O. Functionally, catalyzes the oxidation of mono- and o-diphenols to o-diquinones. This Solanum lycopersicum (Tomato) protein is Polyphenol oxidase D, chloroplastic.